A 34-amino-acid polypeptide reads, in one-letter code: Brevinin-2Rf (34 aa).

Residues C28 and C34 are joined by a disulfide bond.

Expressed by the skin glands.

It is found in the secreted. Its function is as follows. Antimicrobial peptide. The sequence is that of Brevinin-2Rf from Pelophylax ridibundus (Marsh frog).